Consider the following 658-residue polypeptide: ATP-dependent RNA helicase DDX3Y (658 aa).

Positions 1-10 are enriched in basic and acidic residues; sequence MSHVVVKNDP. Positions 1-141 are disordered; that stretch reads MSHVVVKNDP…DDWSKPLPPS (141 aa). Serine 2 carries the N-acetylserine modification. Polar residues predominate over residues 15 to 34; it reads QLANLDLNSEKQSGGASTAS. The segment covering 44–68 has biased composition (basic and acidic residues); the sequence is RNREASKGFHDKDSSGWSCSKDKDA. Position 55 is an N6-acetyllysine (lysine 55). 3 positions are modified to phosphoserine: serine 81, serine 85, and serine 89. The segment covering 93 to 128 has biased composition (basic and acidic residues); the sequence is GRFDDRGRSDYDGIGNRDRPGFGRFERSGHSRWCDK. At arginine 100 the chain carries Omega-N-methylarginine. A Phosphoserine modification is found at serine 101. Tyrosine 103 bears the Phosphotyrosine mark. Residue arginine 109 is modified to Omega-N-methylarginine. Phosphoserine is present on residues serine 129 and serine 181. The Q motif signature appears at 178 to 206; sequence ENFSDIDMGEIIMGNIELTRYTRPTPVQK. 198–205 contributes to the ATP binding site; it reads YTRPTPVQ. The Helicase ATP-binding domain occupies 209 to 401; that stretch reads IPIIKGKRDL…RDFLDEYIFL (193 aa). Residue lysine 213 forms a Glycyl lysine isopeptide (Lys-Gly) (interchain with G-Cter in SUMO2) linkage. 222–229 provides a ligand contact to ATP; that stretch reads AQTGSGKT. Positions 345–348 match the DEAD box motif; the sequence is DEAD. In terms of domain architecture, Helicase C-terminal spans 412–573; that stretch reads NITQKVVWVE…EVPSWLENMA (162 aa). At serine 454 the chain carries Phosphoserine. At arginine 588 the chain carries Omega-N-methylarginine. Phosphoserine occurs at positions 590 and 601. The disordered stretch occupies residues 597–625; sequence DYRQSSGSSSSGFGASRGSSSRSGGSGYG. Over residues 601–619 the composition is skewed to low complexity; that stretch reads SSGSSSSGFGASRGSSSRS. Arginine 613 and arginine 628 each carry omega-N-methylarginine.

This sequence belongs to the DEAD box helicase family. DDX3/DED1 subfamily. May interact with TDRD3.

The protein localises to the cytoplasm. Its subcellular location is the nucleus. The enzyme catalyses ATP + H2O = ADP + phosphate + H(+). In terms of biological role, probable ATP-dependent RNA helicase. May play a role in spermatogenesis. In Pongo abelii (Sumatran orangutan), this protein is ATP-dependent RNA helicase DDX3Y (DDX3Y).